Here is a 305-residue protein sequence, read N- to C-terminus: MSFTDTPEGFRSGFISFVGRPNTGKSTLTNALVGEKIAITANQPETTRHPIRGIVHREDAQIIVVDTPGLHKPRTLLGERLNEVVKDTYADMDLIAITVPADEKIGPGDRWILDAVKKVAPKTPLLGIVTKVDKASRDQVAVQLMELHELLGGNSEVVPVSAVTGEQRDVLLDVITRLLPEGPKFYPDDHITDDDTETRLSELIREAALSGLKDELPHSVAVQIDEILPNDEREGVLDVHAVIYVERPGQKSILIGKDGRRLGRIIHNARPEIIKILGSNVYLDLRIKVLKNWQQDPKQLGRLGF.

Residues 11–181 (RSGFISFVGR…LDVITRLLPE (171 aa)) enclose the Era-type G domain. The tract at residues 19–26 (GRPNTGKS) is G1. 19-26 (GRPNTGKS) serves as a coordination point for GTP. The G2 stretch occupies residues 45–49 (ETTRH). The G3 stretch occupies residues 66–69 (DTPG). GTP is bound by residues 66–70 (DTPGL) and 130–133 (TKVD). The tract at residues 130 to 133 (TKVD) is G4. Positions 160–162 (VSA) are G5. One can recognise a KH type-2 domain in the interval 212–291 (LKDELPHSVA…YLDLRIKVLK (80 aa)).

The protein belongs to the TRAFAC class TrmE-Era-EngA-EngB-Septin-like GTPase superfamily. Era GTPase family. As to quaternary structure, monomer.

Its subcellular location is the cytoplasm. It is found in the cell membrane. Functionally, an essential GTPase that binds both GDP and GTP, with rapid nucleotide exchange. Plays a role in 16S rRNA processing and 30S ribosomal subunit biogenesis and possibly also in cell cycle regulation and energy metabolism. This is GTPase Era from Corynebacterium diphtheriae (strain ATCC 700971 / NCTC 13129 / Biotype gravis).